We begin with the raw amino-acid sequence, 137 residues long: Methylglyoxal synthase (137 aa).

The MGS-like domain occupies 1–137 (MNIALVAHDQ…EVRKSKSQRI (137 aa)). Substrate-binding positions include histidine 8, lysine 12, 34 to 37 (TGTT), and 54 to 55 (SG). Aspartate 60 functions as the Proton donor/acceptor in the catalytic mechanism. Substrate is bound at residue histidine 87.

Belongs to the methylglyoxal synthase family.

The catalysed reaction is dihydroxyacetone phosphate = methylglyoxal + phosphate. In terms of biological role, catalyzes the formation of methylglyoxal from dihydroxyacetone phosphate. The protein is Methylglyoxal synthase of Clostridioides difficile (strain 630) (Peptoclostridium difficile).